A 136-amino-acid chain; its full sequence is Large ribosomal subunit protein uL16c (136 aa).

The protein belongs to the universal ribosomal protein uL16 family. As to quaternary structure, part of the 50S ribosomal subunit.

The protein localises to the plastid. Its subcellular location is the chloroplast. This is Large ribosomal subunit protein uL16c from Oryza sativa (Rice).